Reading from the N-terminus, the 55-residue chain is Large ribosomal subunit protein eL37 (55 aa).

The Zn(2+) site is built by C20, C23, C35, and C38. Residues 20–38 form a C4-type zinc finger; that stretch reads CRRCGKNSYHKRHHRCSSC.

Belongs to the eukaryotic ribosomal protein eL37 family. Requires Zn(2+) as cofactor.

Binds to the 23S rRNA. The sequence is that of Large ribosomal subunit protein eL37 from Cenarchaeum symbiosum (strain A).